The primary structure comprises 103 residues: Large ribosomal subunit protein bL21 (103 aa).

This sequence belongs to the bacterial ribosomal protein bL21 family. Part of the 50S ribosomal subunit. Contacts protein L20.

Its function is as follows. This protein binds to 23S rRNA in the presence of protein L20. In Hamiltonella defensa subsp. Acyrthosiphon pisum (strain 5AT), this protein is Large ribosomal subunit protein bL21.